Consider the following 385-residue polypeptide: MNRRRKLLIPLLFCGAMLTACDDKSAENAAAMTPEVGVVTLSPGSVNVLSELPGRTVPYEVAEIRPQVGGIIIKRNFIEGDKVNQGDSLYQIDPAPLQAELNSAKGSLAKALSTASNARITFNRQASLLKTNYVSRQDYDTARTQLNEAEANVTVAKAAVEQATINLQYANVTSPITGVSGKSSVTVGALVTANQADSLVTVQRLDPIYVDLTQSVQDFLRMKEEVASGQIKQVQGSTPVQLNLENGKRYGQTGTLKFSDPTVDETTGSVTLRAIFPNPNGDLLPGMYVTALVDEGSRQNVLLVPQEGVTHNAQGKATALILDKDDVVQLREIEASKAIGDQWVVTSGLQAGDRVIVSGLQRIRPGIKARAISSSQENASTESKQ.

The N-terminal stretch at Met1–Ala20 is a signal peptide. Cys21 is lipidated: N-palmitoyl cysteine. Cys21 is lipidated: S-diacylglycerol cysteine.

The protein belongs to the membrane fusion protein (MFP) (TC 8.A.1) family. Homotrimer. Part of the tripartite efflux system MdtEF-TolC, which is composed of an inner membrane transporter, MdtF, a membrane fusion protein, MdtE, and an outer membrane component, TolC. The complex forms a large protein conduit and can translocate molecules across both the inner and outer membranes.

Its subcellular location is the cell inner membrane. In terms of biological role, part of the tripartite efflux system MdtEF-TolC, which confers resistance to various compounds. This chain is Multidrug resistance protein MdtE (mdtE), found in Escherichia coli O6:H1 (strain CFT073 / ATCC 700928 / UPEC).